A 98-amino-acid chain; its full sequence is Small ribosomal subunit protein bS20 (98 aa).

Basic residues predominate over residues 1-15 (MAPKKTTKKGGPKKR). The disordered stretch occupies residues 1-21 (MAPKKTTKKGGPKKRPSAEKR).

The protein belongs to the bacterial ribosomal protein bS20 family.

Functionally, binds directly to 16S ribosomal RNA. This chain is Small ribosomal subunit protein bS20, found in Chlamydia abortus (strain DSM 27085 / S26/3) (Chlamydophila abortus).